The chain runs to 450 residues: Bifunctional protein GlmU (450 aa).

The tract at residues 1–217 (MKTLILAAGL…VDEITGVNNR (217 aa)) is pyrophosphorylase. Residues 6–9 (LAAG), lysine 20, glutamine 68, 73–74 (GT), 95–97 (YGD), glycine 134, glutamate 146, asparagine 161, and asparagine 215 contribute to the UDP-N-acetyl-alpha-D-glucosamine site. Mg(2+) is bound at residue aspartate 97. Mg(2+) is bound at residue asparagine 215. Residues 218–238 (IQLANLEKKIRRKINEKLMNQ) are linker. Residues 239–450 (GVRIIDPNAV…GGQKNANNKK (212 aa)) are N-acetyltransferase. Residues arginine 320 and lysine 338 each coordinate UDP-N-acetyl-alpha-D-glucosamine. Catalysis depends on histidine 350, which acts as the Proton acceptor. Tyrosine 353 and asparagine 364 together coordinate UDP-N-acetyl-alpha-D-glucosamine. Residues alanine 367, 373-374 (NY), serine 392, alanine 410, and arginine 427 each bind acetyl-CoA.

In the N-terminal section; belongs to the N-acetylglucosamine-1-phosphate uridyltransferase family. This sequence in the C-terminal section; belongs to the transferase hexapeptide repeat family. As to quaternary structure, homotrimer. Requires Mg(2+) as cofactor.

Its subcellular location is the cytoplasm. It carries out the reaction alpha-D-glucosamine 1-phosphate + acetyl-CoA = N-acetyl-alpha-D-glucosamine 1-phosphate + CoA + H(+). The catalysed reaction is N-acetyl-alpha-D-glucosamine 1-phosphate + UTP + H(+) = UDP-N-acetyl-alpha-D-glucosamine + diphosphate. It participates in nucleotide-sugar biosynthesis; UDP-N-acetyl-alpha-D-glucosamine biosynthesis; N-acetyl-alpha-D-glucosamine 1-phosphate from alpha-D-glucosamine 6-phosphate (route II): step 2/2. Its pathway is nucleotide-sugar biosynthesis; UDP-N-acetyl-alpha-D-glucosamine biosynthesis; UDP-N-acetyl-alpha-D-glucosamine from N-acetyl-alpha-D-glucosamine 1-phosphate: step 1/1. It functions in the pathway bacterial outer membrane biogenesis; LPS lipid A biosynthesis. Catalyzes the last two sequential reactions in the de novo biosynthetic pathway for UDP-N-acetylglucosamine (UDP-GlcNAc). The C-terminal domain catalyzes the transfer of acetyl group from acetyl coenzyme A to glucosamine-1-phosphate (GlcN-1-P) to produce N-acetylglucosamine-1-phosphate (GlcNAc-1-P), which is converted into UDP-GlcNAc by the transfer of uridine 5-monophosphate (from uridine 5-triphosphate), a reaction catalyzed by the N-terminal domain. This is Bifunctional protein GlmU from Thermosipho melanesiensis (strain DSM 12029 / CIP 104789 / BI429).